The following is a 436-amino-acid chain: Gamma-glutamyl phosphate reductase (436 aa).

Belongs to the gamma-glutamyl phosphate reductase family.

It is found in the cytoplasm. The enzyme catalyses L-glutamate 5-semialdehyde + phosphate + NADP(+) = L-glutamyl 5-phosphate + NADPH + H(+). Its pathway is amino-acid biosynthesis; L-proline biosynthesis; L-glutamate 5-semialdehyde from L-glutamate: step 2/2. Catalyzes the NADPH-dependent reduction of L-glutamate 5-phosphate into L-glutamate 5-semialdehyde and phosphate. The product spontaneously undergoes cyclization to form 1-pyrroline-5-carboxylate. This is Gamma-glutamyl phosphate reductase from Prochlorococcus marinus (strain MIT 9301).